Here is a 285-residue protein sequence, read N- to C-terminus: MKLCGFDVGLEQRLFLIAGPCVIESAQLQMDVAGQLREITARLGMPFIFKSSFDKANRSSGSSYRGPGRDKGLEILARVRRELALPVLTDVHTEDDIAAAAQVVDVLQTPAFLCRQTDFISAAARCGKPVNIKKGQFLAPHEMHNVIDKARAAARQAGLSEDRFMACERGASFGYNNLVSDMRSLAIMRASGAPVVFDATHSVQLPGSQGSRSGGQREMVPVLARAAVAAGVAGIFMETHPDPDRALSDGPNAVPLKHMQALLETLVALDGVTKRHGFLENRFGA.

It belongs to the KdsA family.

The protein resides in the cytoplasm. It catalyses the reaction D-arabinose 5-phosphate + phosphoenolpyruvate + H2O = 3-deoxy-alpha-D-manno-2-octulosonate-8-phosphate + phosphate. It participates in carbohydrate biosynthesis; 3-deoxy-D-manno-octulosonate biosynthesis; 3-deoxy-D-manno-octulosonate from D-ribulose 5-phosphate: step 2/3. It functions in the pathway bacterial outer membrane biogenesis; lipopolysaccharide biosynthesis. This is 2-dehydro-3-deoxyphosphooctonate aldolase from Verminephrobacter eiseniae (strain EF01-2).